A 196-amino-acid polypeptide reads, in one-letter code: ATP-dependent Clp protease proteolytic subunit (196 aa).

The active-site Nucleophile is S101. Residue H126 is part of the active site.

This sequence belongs to the peptidase S14 family. In terms of assembly, component of the chloroplastic Clp protease core complex.

Its subcellular location is the plastid. The protein localises to the chloroplast stroma. It catalyses the reaction Hydrolysis of proteins to small peptides in the presence of ATP and magnesium. alpha-casein is the usual test substrate. In the absence of ATP, only oligopeptides shorter than five residues are hydrolyzed (such as succinyl-Leu-Tyr-|-NHMec, and Leu-Tyr-Leu-|-Tyr-Trp, in which cleavage of the -Tyr-|-Leu- and -Tyr-|-Trp bonds also occurs).. In terms of biological role, cleaves peptides in various proteins in a process that requires ATP hydrolysis. Has a chymotrypsin-like activity. Plays a major role in the degradation of misfolded proteins. The polypeptide is ATP-dependent Clp protease proteolytic subunit (Lactuca sativa (Garden lettuce)).